Reading from the N-terminus, the 160-residue chain is Cytochrome b6-f complex subunit 4 (160 aa).

The next 3 helical transmembrane spans lie at 36–56, 95–115, and 131–151; these read LLYM…GLAV, LLGV…PFIE, and TVFL…TLPI.

This sequence belongs to the cytochrome b family. PetD subfamily. The 4 large subunits of the cytochrome b6-f complex are cytochrome b6, subunit IV (17 kDa polypeptide, petD), cytochrome f and the Rieske protein, while the 4 small subunits are petG, petL, petM and petN. The complex functions as a dimer.

The protein resides in the plastid. Its subcellular location is the chloroplast thylakoid membrane. Its function is as follows. Component of the cytochrome b6-f complex, which mediates electron transfer between photosystem II (PSII) and photosystem I (PSI), cyclic electron flow around PSI, and state transitions. In Nephroselmis olivacea (Green alga), this protein is Cytochrome b6-f complex subunit 4.